A 413-amino-acid chain; its full sequence is Mitochondrial carrier protein MTM1 (413 aa).

Solcar repeat units lie at residues 59–193, 205–305, and 318–406; these read IGFT…FRNR, MTFC…IKKR, and GVFG…VKYV. Helical transmembrane passes span 65 to 85, 170 to 190, 204 to 226, 284 to 304, 316 to 336, and 378 to 399; these read VFSA…LDVV, NAGL…YDMF, AMTF…TVCY, QLAR…PIKK, LVGV…IAAA, and LFMG…VVSF.

The protein belongs to the mitochondrial carrier (TC 2.A.29) family. Ubiquitous.

Its subcellular location is the mitochondrion inner membrane. In terms of biological role, involved in the mitochondrial activation of MSD1 by specifically facilitating insertion of the essential manganese cofactor. Has the ability to activate iron regulon in an iron-dependent manner. The polypeptide is Mitochondrial carrier protein MTM1 (MTM1) (Arabidopsis thaliana (Mouse-ear cress)).